A 1883-amino-acid chain; its full sequence is DDB1- and CUL4-associated factor homolog 1 (1883 aa).

2 disordered regions span residues 1–47 (MDGQ…QSVE) and 309–340 (KPGD…HEGA). The segment covering 37–47 (NPEEGEEQSVE) has biased composition (acidic residues). The segment covering 309–322 (KPGDDNSVRDDPSR) has biased composition (basic and acidic residues). The span at 323–334 (HRLNRSKSRGRG) shows a compositional bias: basic residues. Serine 349 is modified (phosphoserine). Residues 882-924 (NKPPLAQNHQPVPGQATTRPSTDVAVGTQSTGNAPQTPVAPAS) are disordered. Over residues 888–917 (QNHQPVPGQATTRPSTDVAVGTQSTGNAPQ) the composition is skewed to polar residues. Positions 1087–1119 (DSKELLLLIHEHLQASGLGDTASALLKEAQLTP) constitute a LisH domain. 3 disordered regions span residues 1157-1202 (TSKP…QWPS), 1214-1260 (PKIN…ALPQ), and 1310-1377 (SELR…NPER). Residues 1238 to 1251 (LTFSPSFSSQSRKQ) show a composition bias toward low complexity. The span at 1310–1329 (SELRDSSVPGKRIDLGERRN) shows a compositional bias: basic and acidic residues. Residues 1330 to 1362 (STFADGSGLQTPASALDANQSGSSRLGQMTPAS) are compositionally biased toward polar residues. 5 WD repeats span residues 1464–1503 (DETA…MLES), 1506–1546 (GHQA…GGPR), 1548–1586 (SFDG…TCSP), 1587–1626 (CQKL…RRIP), and 1633–1671 (DQFT…VPSL). 2 consecutive short sequence motifs (DWD box) follow at residues 1619–1626 (VLWDRRIP) and 1655–1662 (EIWDMRTF). A disordered region spans residues 1763–1883 (YEIGRRRPTD…DDYRDNIRSS (121 aa)). 2 stretches are compositionally biased toward acidic residues: residues 1773–1796 (DDSD…EDDL) and 1808–1864 (DSGD…DGEM).

It belongs to the VPRBP/DCAF1 family. As to quaternary structure, component of the CUL4-RBX1-DDB1-DCAF1 E3 ubiquitin-protein ligase complex. Interacts with DDB1A through its DWD motifs. Ubiquitous but predominantly expressed in the inflorescence and roots.

The protein resides in the nucleus. It participates in protein modification; protein ubiquitination. In terms of biological role, component of the CUL4-RBX1-DDB1-DCAF1 E3 ubiquitin-protein ligase complex, DCAF1 may function as the substrate recognition module within this complex. Appears to be required for plant embryogenesis and to affect several other developmental processes including leaf, shoot, and flower development. This Arabidopsis thaliana (Mouse-ear cress) protein is DDB1- and CUL4-associated factor homolog 1 (DCAF1).